The primary structure comprises 346 residues: Biotin synthase (346 aa).

The Radical SAM core domain maps to 38–256; it reads KQIQVSTLLS…IAVARIMMPT (219 aa). [4Fe-4S] cluster contacts are provided by Cys-53, Cys-57, and Cys-60. The [2Fe-2S] cluster site is built by Cys-97, Cys-128, Cys-188, and Arg-260.

This sequence belongs to the radical SAM superfamily. Biotin synthase family. As to quaternary structure, homodimer. Requires [4Fe-4S] cluster as cofactor. [2Fe-2S] cluster serves as cofactor.

The enzyme catalyses (4R,5S)-dethiobiotin + (sulfur carrier)-SH + 2 reduced [2Fe-2S]-[ferredoxin] + 2 S-adenosyl-L-methionine = (sulfur carrier)-H + biotin + 2 5'-deoxyadenosine + 2 L-methionine + 2 oxidized [2Fe-2S]-[ferredoxin]. It participates in cofactor biosynthesis; biotin biosynthesis; biotin from 7,8-diaminononanoate: step 2/2. Its function is as follows. Catalyzes the conversion of dethiobiotin (DTB) to biotin by the insertion of a sulfur atom into dethiobiotin via a radical-based mechanism. The protein is Biotin synthase of Salmonella arizonae (strain ATCC BAA-731 / CDC346-86 / RSK2980).